A 59-amino-acid chain; its full sequence is Large ribosomal subunit protein uL30 (59 aa).

The protein belongs to the universal ribosomal protein uL30 family. In terms of assembly, part of the 50S ribosomal subunit.

This is Large ribosomal subunit protein uL30 from Yersinia pseudotuberculosis serotype I (strain IP32953).